A 258-amino-acid chain; its full sequence is Glucose 1-dehydrogenase 2 (258 aa).

11-35 serves as a coordination point for NADP(+); that stretch reads IVTGSSKGIGKAIAERFGKEKMNVV. Substrate is bound at residue S146. Y159 (proton acceptor) is an active-site residue.

This sequence belongs to the short-chain dehydrogenases/reductases (SDR) family. As to quaternary structure, homotetramer.

It carries out the reaction D-glucose + NAD(+) = D-glucono-1,5-lactone + NADH + H(+). The enzyme catalyses D-glucose + NADP(+) = D-glucono-1,5-lactone + NADPH + H(+). This chain is Glucose 1-dehydrogenase 2 (ycdF), found in Bacillus subtilis (strain 168).